The sequence spans 132 residues: Small ribosomal subunit protein uS8 (132 aa).

This sequence belongs to the universal ribosomal protein uS8 family. Part of the 30S ribosomal subunit. Contacts proteins S5 and S12.

One of the primary rRNA binding proteins, it binds directly to 16S rRNA central domain where it helps coordinate assembly of the platform of the 30S subunit. The polypeptide is Small ribosomal subunit protein uS8 (Rickettsia canadensis (strain McKiel)).